The following is a 101-amino-acid chain: Small ribosomal subunit protein uS14 (101 aa).

The protein belongs to the universal ribosomal protein uS14 family. Part of the 30S ribosomal subunit. Contacts proteins S3 and S10.

Its function is as follows. Binds 16S rRNA, required for the assembly of 30S particles and may also be responsible for determining the conformation of the 16S rRNA at the A site. The chain is Small ribosomal subunit protein uS14 from Blochmanniella pennsylvanica (strain BPEN).